Here is a 334-residue protein sequence, read N- to C-terminus: MTVRIGINGFGRIGRNVFRAAAARSSELEIVAVNDLGDVPTMAHLLAYDSILGRFPEEVTAEPGAIRVGDRTIKVLAERDPGALPWGDLGVDIVIESTGIFTDAAKARSHVDGGAKKVIIAAPASGEDFTVVLGVNDGDYDPERHTIISNASCTTNCLGVLAKVLHDAVGIDSGMMTTVHAYTQDQNLQDAPHKDLRRARAAALNIVPTSSGAAKAIGLVLPELAGRLDAFALRVPVPTGSVTDLTVTTRRGTSVEEVKEAYAAAASGPYKGLLSYVDAPLVSTDIVGDPASCVFDAGLTRVSGPQVKVVGWYDNEWGYSNRLIDLATLIGSSL.

Residues 12–13, aspartate 35, and arginine 79 each bind NAD(+); that span reads RI. D-glyceraldehyde 3-phosphate is bound by residues 152 to 154, threonine 183, arginine 198, 211 to 212, and arginine 234; these read SCT and SG. Cysteine 153 acts as the Nucleophile in catalysis. Asparagine 315 lines the NAD(+) pocket.

The protein belongs to the glyceraldehyde-3-phosphate dehydrogenase family. In terms of assembly, homotetramer.

The protein localises to the cytoplasm. The enzyme catalyses D-glyceraldehyde 3-phosphate + phosphate + NAD(+) = (2R)-3-phospho-glyceroyl phosphate + NADH + H(+). The protein operates within carbohydrate degradation; glycolysis; pyruvate from D-glyceraldehyde 3-phosphate: step 1/5. Inhibited by pentalenolactone (PL). Its function is as follows. Catalyzes the oxidative phosphorylation of glyceraldehyde 3-phosphate (G3P) to 1,3-bisphosphoglycerate (BPG) using the cofactor NAD. The first reaction step involves the formation of a hemiacetal intermediate between G3P and a cysteine residue, and this hemiacetal intermediate is then oxidized to a thioester, with concomitant reduction of NAD to NADH. The reduced NADH is then exchanged with the second NAD, and the thioester is attacked by a nucleophilic inorganic phosphate to produce BPG. The chain is Glyceraldehyde-3-phosphate dehydrogenase 2 (gap2) from Streptomyces arenae.